A 105-amino-acid chain; its full sequence is Met repressor (105 aa).

The protein belongs to the MetJ family. Homodimer.

The protein resides in the cytoplasm. In terms of biological role, this regulatory protein, when combined with SAM (S-adenosylmethionine) represses the expression of the methionine regulon and of enzymes involved in SAM synthesis. In Haemophilus ducreyi (strain 35000HP / ATCC 700724), this protein is Met repressor.